Reading from the N-terminus, the 286-residue chain is Phosphatidylserine decarboxylase proenzyme (286 aa).

Catalysis depends on charge relay system; for autoendoproteolytic cleavage activity residues aspartate 89, histidine 146, and serine 252. The active-site Schiff-base intermediate with substrate; via pyruvic acid; for decarboxylase activity is the serine 252. Serine 252 is subject to Pyruvic acid (Ser); by autocatalysis.

The protein belongs to the phosphatidylserine decarboxylase family. PSD-B subfamily. Prokaryotic type I sub-subfamily. Heterodimer of a large membrane-associated beta subunit and a small pyruvoyl-containing alpha subunit. Requires pyruvate as cofactor. In terms of processing, is synthesized initially as an inactive proenzyme. Formation of the active enzyme involves a self-maturation process in which the active site pyruvoyl group is generated from an internal serine residue via an autocatalytic post-translational modification. Two non-identical subunits are generated from the proenzyme in this reaction, and the pyruvate is formed at the N-terminus of the alpha chain, which is derived from the carboxyl end of the proenzyme. The autoendoproteolytic cleavage occurs by a canonical serine protease mechanism, in which the side chain hydroxyl group of the serine supplies its oxygen atom to form the C-terminus of the beta chain, while the remainder of the serine residue undergoes an oxidative deamination to produce ammonia and the pyruvoyl prosthetic group on the alpha chain. During this reaction, the Ser that is part of the protease active site of the proenzyme becomes the pyruvoyl prosthetic group, which constitutes an essential element of the active site of the mature decarboxylase.

Its subcellular location is the cell membrane. The enzyme catalyses a 1,2-diacyl-sn-glycero-3-phospho-L-serine + H(+) = a 1,2-diacyl-sn-glycero-3-phosphoethanolamine + CO2. Its pathway is phospholipid metabolism; phosphatidylethanolamine biosynthesis; phosphatidylethanolamine from CDP-diacylglycerol: step 2/2. Catalyzes the formation of phosphatidylethanolamine (PtdEtn) from phosphatidylserine (PtdSer). The polypeptide is Phosphatidylserine decarboxylase proenzyme (Shewanella loihica (strain ATCC BAA-1088 / PV-4)).